A 263-amino-acid chain; its full sequence is Endonuclease 8 (263 aa).

Catalysis depends on Pro-2, which acts as the Schiff-base intermediate with DNA. The active-site Proton donor is Glu-3. Lys-53 serves as the catalytic Proton donor; for beta-elimination activity. The DNA site is built by Gln-70, Arg-125, and Asn-169. The segment at 229-263 (KVFHRDGEACERCGGIIEKTTLSSRPFYWCPHCQK) adopts an FPG-type zinc-finger fold. Arg-253 (proton donor; for delta-elimination activity) is an active-site residue.

This sequence belongs to the FPG family. Requires Zn(2+) as cofactor.

The enzyme catalyses 2'-deoxyribonucleotide-(2'-deoxyribose 5'-phosphate)-2'-deoxyribonucleotide-DNA = a 3'-end 2'-deoxyribonucleotide-(2,3-dehydro-2,3-deoxyribose 5'-phosphate)-DNA + a 5'-end 5'-phospho-2'-deoxyribonucleoside-DNA + H(+). In terms of biological role, involved in base excision repair of DNA damaged by oxidation or by mutagenic agents. Acts as a DNA glycosylase that recognizes and removes damaged bases. Has a preference for oxidized pyrimidines, such as thymine glycol, 5,6-dihydrouracil and 5,6-dihydrothymine. Has AP (apurinic/apyrimidinic) lyase activity and introduces nicks in the DNA strand. Cleaves the DNA backbone by beta-delta elimination to generate a single-strand break at the site of the removed base with both 3'- and 5'-phosphates. This chain is Endonuclease 8, found in Salmonella enteritidis PT4 (strain P125109).